The following is a 151-amino-acid chain: Chaperonin GroEL (151 aa).

41–45 (DGTTT) is a binding site for ATP.

This sequence belongs to the chaperonin (HSP60) family. Forms a cylinder of 14 subunits composed of two heptameric rings stacked back-to-back. Interacts with the co-chaperonin GroES.

Its subcellular location is the cytoplasm. The enzyme catalyses ATP + H2O + a folded polypeptide = ADP + phosphate + an unfolded polypeptide.. In terms of biological role, together with its co-chaperonin GroES, plays an essential role in assisting protein folding. The GroEL-GroES system forms a nano-cage that allows encapsulation of the non-native substrate proteins and provides a physical environment optimized to promote and accelerate protein folding. The chain is Chaperonin GroEL from Mycobacterium marinum.